A 402-amino-acid polypeptide reads, in one-letter code: Phosphoglycerate kinase (402 aa).

Substrate is bound by residues 24–26 (DLN), arginine 39, 62–65 (HLGR), arginine 121, and arginine 161. Residues lysine 211, glycine 299, glutamate 330, and 359–362 (GGDS) each bind ATP.

Belongs to the phosphoglycerate kinase family. Monomer.

It localises to the cytoplasm. It catalyses the reaction (2R)-3-phosphoglycerate + ATP = (2R)-3-phospho-glyceroyl phosphate + ADP. It participates in carbohydrate degradation; glycolysis; pyruvate from D-glyceraldehyde 3-phosphate: step 2/5. The polypeptide is Phosphoglycerate kinase (Mycolicibacterium gilvum (strain PYR-GCK) (Mycobacterium gilvum (strain PYR-GCK))).